Consider the following 131-residue polypeptide: Large ribosomal subunit protein bL17 (131 aa).

Belongs to the bacterial ribosomal protein bL17 family. Part of the 50S ribosomal subunit. Contacts protein L32.

This chain is Large ribosomal subunit protein bL17, found in Methylobacillus flagellatus (strain ATCC 51484 / DSM 6875 / VKM B-1610 / KT).